We begin with the raw amino-acid sequence, 67 residues long: Large ribosomal subunit protein bL35 (67 aa).

A disordered region spans residues 22-52 (VLAGPGKKRHNLSARSQKAKRQNRGSQVLTH). Over residues 27-44 (GKKRHNLSARSQKAKRQN) the composition is skewed to basic residues.

This sequence belongs to the bacterial ribosomal protein bL35 family.

The chain is Large ribosomal subunit protein bL35 from Granulibacter bethesdensis (strain ATCC BAA-1260 / CGDNIH1).